A 61-amino-acid chain; its full sequence is Small ribosomal subunit protein uS14 (61 aa).

Residues Cys24, Cys27, Cys40, and Cys43 each contribute to the Zn(2+) site.

This sequence belongs to the universal ribosomal protein uS14 family. Zinc-binding uS14 subfamily. Part of the 30S ribosomal subunit. Contacts proteins S3 and S10. Zn(2+) serves as cofactor.

Functionally, binds 16S rRNA, required for the assembly of 30S particles and may also be responsible for determining the conformation of the 16S rRNA at the A site. The chain is Small ribosomal subunit protein uS14 from Finegoldia magna (strain ATCC 29328 / DSM 20472 / WAL 2508) (Peptostreptococcus magnus).